Reading from the N-terminus, the 413-residue chain is Inactive squalene synthase 2 (413 aa).

Position 2 is an N-acetylglycine (G2). A run of 2 helical transmembrane segments spans residues 283–303 (AIFQSCAIPQIVAIGTLALCY) and 390–410 (AIFVVMFVLLLAIVVVYLKAN).

Belongs to the phytoene/squalene synthase family. Mg(2+) is required as a cofactor. It depends on Mn(2+) as a cofactor. As to expression, mostly expressed in hypocotyls, leaves and cotyledons, and, to a lower extent, in stems.

The protein localises to the endoplasmic reticulum membrane. This Arabidopsis thaliana (Mouse-ear cress) protein is Inactive squalene synthase 2.